Reading from the N-terminus, the 504-residue chain is Putative arrestin-related trafficking adapter SPBC839.02 (504 aa).

The disordered stretch occupies residues 481-504 (QAPPPKYDDIFQSGSSHDENHDDN).

Belongs to the ALY1 family.

May regulate endocytosis in response to extracellular stimuli. The protein is Putative arrestin-related trafficking adapter SPBC839.02 of Schizosaccharomyces pombe (strain 972 / ATCC 24843) (Fission yeast).